The following is a 512-amino-acid chain: Putative ankyrin repeat protein FPV233 (512 aa).

ANK repeat units follow at residues 45–73 (IPFIPLHQAIEARNIDIIKSIITVDNVNQ), 77–106 (DDTYPIHIICKEPNMLAISYMLRSINQCSV), 136–168 (IQDIDLKYIDKKSKDDIIEITKLLFSYGADINM), 172–201 (HGNSPLHYATENPDQRLTRLLLSKGANPNI), 205–236 (TNKSPLYYSIESDNPDITMLLIDKFIFNNTDP), 238–262 (LSHAIKHYRKPILHALIENGASINA), 266–296 (YGNTPLHYAVSYCKDIDVIKLLLERGVDVNA), and 301–329 (RNLTPLHSSYLKSPRVLKLLLQYGADINS).

In Vertebrata (FPV), this protein is Putative ankyrin repeat protein FPV233.